The following is a 922-amino-acid chain: Up-regulator of cell proliferation (922 aa).

The segment at 1 to 20 (MASSGHSDLGEVTSEIKASE) is disordered. Residue Ser-3 is modified to Phosphoserine. A VLIG-type G domain is found at 680–920 (RSRLVVLSAL…NIQQLIELVR (241 aa)).

This sequence belongs to the TRAFAC class dynamin-like GTPase superfamily. Very large inducible GTPase (VLIG) family.

The protein resides in the cytoplasm. The protein localises to the nucleus. Its function is as follows. May be involved in cell cycle progression through the regulation of cyclin D1 expression. The protein is Up-regulator of cell proliferation (URGCP) of Bos taurus (Bovine).